The chain runs to 623 residues: Ciliated left-right organizer metallopeptidase (623 aa).

The first 20 residues, 1 to 20, serve as a signal peptide directing secretion; sequence MSFLLCIGILLLPWFPCVCG. At 21 to 578 the chain is on the extracellular side; sequence KCIFDQIQRS…LFLVSEAKIS (558 aa). Histidine 249 lines the Zn(2+) pocket. Residue glutamate 250 is part of the active site. Zn(2+) is bound by residues histidine 253 and histidine 326. Residues 579–599 form a helical membrane-spanning segment; it reads LAAVLSLMAVFALLSAAVLLY. Residues 600–623 lie on the Cytoplasmic side of the membrane; that stretch reads RKNLSVRVHAASYRTPLPHILYRN.

The protein belongs to the peptidase M8 family. The cofactor is Zn(2+). In terms of tissue distribution, expressed specifically in dorsal forerunner cells (DFCs) that form a ciliated Kupffer's vesicle later.

The protein localises to the membrane. Functionally, plays an essential role for patterning the left-right axis. Requires solely on the left side, downstream of the leftward flow, but upstream of dand5, a nodal inhibitor involved in left-right patterning. This chain is Ciliated left-right organizer metallopeptidase (cirop), found in Danio rerio (Zebrafish).